The following is a 432-amino-acid chain: Homogentisate 1,2-dioxygenase (432 aa).

The Fe cation site is built by histidine 333, glutamate 339, and histidine 369.

This sequence belongs to the homogentisate dioxygenase family. Requires Fe cation as cofactor.

It carries out the reaction homogentisate + O2 = 4-maleylacetoacetate + H(+). It functions in the pathway amino-acid degradation; L-phenylalanine degradation; acetoacetate and fumarate from L-phenylalanine: step 4/6. This Dictyostelium discoideum (Social amoeba) protein is Homogentisate 1,2-dioxygenase (hgd).